Reading from the N-terminus, the 657-residue chain is UvrABC system protein B (657 aa).

The 158-residue stretch at 25–182 folds into the Helicase ATP-binding domain; sequence KSIKQGNEFQ…KKLIEIQYER (158 aa). Position 38–45 (38–45) interacts with ATP; that stretch reads GVTGSGKT. The Beta-hairpin signature appears at 91 to 114; that stretch reads YYDYYQPEAYVPQTDTFIEKDASI. The 167-residue stretch at 429-595 folds into the Helicase C-terminal domain; the sequence is QIDDLYTEIQ…TINKEVRELI (167 aa). The 36-residue stretch at 621-656 folds into the UVR domain; sequence KKLIKEYTDEMKLAAKNLQFERAAQLRDKIEELKGK.

It belongs to the UvrB family. In terms of assembly, forms a heterotetramer with UvrA during the search for lesions. Interacts with UvrC in an incision complex.

The protein resides in the cytoplasm. The UvrABC repair system catalyzes the recognition and processing of DNA lesions. A damage recognition complex composed of 2 UvrA and 2 UvrB subunits scans DNA for abnormalities. Upon binding of the UvrA(2)B(2) complex to a putative damaged site, the DNA wraps around one UvrB monomer. DNA wrap is dependent on ATP binding by UvrB and probably causes local melting of the DNA helix, facilitating insertion of UvrB beta-hairpin between the DNA strands. Then UvrB probes one DNA strand for the presence of a lesion. If a lesion is found the UvrA subunits dissociate and the UvrB-DNA preincision complex is formed. This complex is subsequently bound by UvrC and the second UvrB is released. If no lesion is found, the DNA wraps around the other UvrB subunit that will check the other stand for damage. This is UvrABC system protein B from Clostridium botulinum (strain Eklund 17B / Type B).